A 183-amino-acid polypeptide reads, in one-letter code: Der GTPase-activating protein YihI (183 aa).

The span at 1–18 shows a compositional bias: low complexity; that stretch reads MNQPSKAPRAPRSSAATP. Residues 1 to 114 are disordered; sequence MNQPSKAPRA…EEELAKLEND (114 aa). Positions 25–34 are enriched in basic and acidic residues; the sequence is RAELDQEARE. Residues 56 to 65 show a composition bias toward low complexity; the sequence is NQKNKAAAQA. A compositionally biased stretch (basic and acidic residues) spans 92–114; that stretch reads PKAEAKPKPRLTPEEELAKLEND.

It belongs to the YihI family. Interacts with Der.

Functionally, a GTPase-activating protein (GAP) that modifies Der/EngA GTPase function. May play a role in ribosome biogenesis. The chain is Der GTPase-activating protein YihI from Serratia proteamaculans (strain 568).